The sequence spans 455 residues: Membrane protein Pbs54 (455 aa).

The helical transmembrane segment at 12–32 (IISIIILILRISLFSCAEHLF) threads the bilayer. 3 N-linked (GlcNAc...) asparagine glycosylation sites follow: Asn-41, Asn-102, and Asn-125. 6 helical membrane passes run 181–201 (IFLIFLISYMYWFCIKILFNG), 220–240 (FIFFVILKISLIFLPAILSCI), 244–264 (ILTFYFYSISMSPCKDIFYLF), 285–305 (ILIGNVIYNFLCPPKIIIIFI), 312–332 (FLVKIICLTIILFISFLIFFL), and 346–366 (FVFSFTSSYLIVSCFAYFWNI). Residue Asn-373 is glycosylated (N-linked (GlcNAc...) asparagine). The chain crosses the membrane as a helical span at residues 398–418 (NMFALFMIFAMSILSIIFPRI).

The protein resides in the cell projection. It localises to the cilium. It is found in the flagellum. Its subcellular location is the cell membrane. Its function is as follows. Plays a role in gamete fertilization. Required for the successful transmission of parasites to mosquito. This chain is Membrane protein Pbs54, found in Plasmodium berghei (strain Anka).